A 20-amino-acid chain; its full sequence is Thylakoid lumenal 20 kDa protein (20 aa).

The disordered stretch occupies residues 1–20 (RDVDVGSFLPKSPSDPSMVL).

The protein localises to the plastid. Its subcellular location is the chloroplast thylakoid lumen. This is Thylakoid lumenal 20 kDa protein from Spinacia oleracea (Spinach).